The primary structure comprises 309 residues: Taste receptor type 2 member 114 (309 aa).

Over 1 to 7 (MLGAMEG) the chain is Extracellular. Residues 8 to 28 (VLLSVATSEALLGIVGNTFIA) traverse the membrane as a helical segment. The Cytoplasmic segment spans residues 29–43 (LVNCMDCTRNKNLYN). The chain crosses the membrane as a helical span at residues 44 to 64 (IGFILTGLAISRICLVWILIT). Topologically, residues 65–87 (EAYIKIFSPQLLSPINIIELISY) are extracellular. A helical transmembrane segment spans residues 88 to 108 (LWIITSQLNVWFATSLSIFYF). Over 109–127 (LKIANFSHHIFLWLKRRIN) the chain is Cytoplasmic. Residues 128 to 148 (IVFAFLIGCLLMSWLFSFPVV) form a helical membrane-spanning segment. Residues 149 to 182 (VKMVKDKKMLYINSSWQIHMKKSELIINYVFTNG) are Extracellular-facing. The N-linked (GlcNAc...) asparagine glycan is linked to Asn161. The helical transmembrane segment at 183–203 (GVFLLFIIMLIVCFLLIISLW) threads the bilayer. Over 204–233 (RHSKWMQSNESGFRDLNTEVHVKTIKVLLS) the chain is Cytoplasmic. The helical transmembrane segment at 234–254 (FIILFILHLIGITINVICLLV) threads the bilayer. The Extracellular portion of the chain corresponds to 255–259 (PENNL). The helical transmembrane segment at 260–280 (LFVFGLTIAFLYPCCHSLILI) threads the bilayer. Residues 281 to 309 (LANSRLKRCFVRILQQLMCSEEGKEFRNT) lie on the Cytoplasmic side of the membrane.

It belongs to the G-protein coupled receptor T2R family.

The protein localises to the membrane. Its function is as follows. Putative taste receptor which may play a role in the perception of bitterness. The polypeptide is Taste receptor type 2 member 114 (Rattus norvegicus (Rat)).